The sequence spans 508 residues: Lysine--tRNA ligase (508 aa).

Mg(2+) is bound by residues Glu418 and Glu425.

Belongs to the class-II aminoacyl-tRNA synthetase family. Homodimer. It depends on Mg(2+) as a cofactor.

The protein localises to the cytoplasm. It carries out the reaction tRNA(Lys) + L-lysine + ATP = L-lysyl-tRNA(Lys) + AMP + diphosphate. This Burkholderia pseudomallei (strain K96243) protein is Lysine--tRNA ligase.